The chain runs to 337 residues: Formamidase (337 aa).

A CN hydrolase domain is found at 14–257 (VVIGLVQLQL…DEIITAEVRP (244 aa)). E60 acts as the Proton acceptor in catalysis. The active-site Proton donor is K129. C162 serves as the catalytic Nucleophile.

The protein belongs to the carbon-nitrogen hydrolase superfamily. Aliphatic amidase family.

It carries out the reaction formamide + H2O = formate + NH4(+). Is an aliphatic amidase with a restricted substrate specificity, as it only hydrolyzes formamide. In Bradyrhizobium diazoefficiens (strain JCM 10833 / BCRC 13528 / IAM 13628 / NBRC 14792 / USDA 110), this protein is Formamidase.